The chain runs to 723 residues: ABC transporter F family member 4 (723 aa).

The segment at 1 to 117 (MGKKKSDESA…KEQKKREAKE (117 aa)) is disordered. Over residues 18 to 31 (SGKDASKDSKKEKL) the composition is skewed to basic and acidic residues. Polar residues predominate over residues 50–65 (GSSSRTKAAPKSTSYT). A compositionally biased stretch (acidic residues) spans 72–84 (PSDEEDDGESDEE). A compositionally biased stretch (basic and acidic residues) spans 95 to 117 (KSEQRHLEISVTDKEQKKREAKE). An ABC transporter 1 domain is found at 163–423 (ITIESFSVSA…EMNKKFDVYD (261 aa)). An ATP-binding site is contributed by 195–202 (GPNGMGKS). Disordered regions lie at residues 256-275 (LQKS…DDDD) and 427-472 (KAAK…APEA). Residues 266-275 (ENVDGEDDDD) are compositionally biased toward acidic residues. The span at 437 to 446 (QQEKVKDRAK) shows a compositional bias: basic and acidic residues. Positions 496 to 721 (LQLIEVSFSY…DLQREIKAEV (226 aa)) constitute an ABC transporter 2 domain. 530 to 537 (GPNGAGKS) is a binding site for ATP.

The protein belongs to the ABC transporter superfamily. ABCF family. EF3 (TC 3.A.1.121) subfamily.

The polypeptide is ABC transporter F family member 4 (ABCF4) (Arabidopsis thaliana (Mouse-ear cress)).